The sequence spans 185 residues: Coiled-coil domain-containing protein 32 (185 aa).

Residues 78 to 98 (LASLEKKLRRIKGLNQEVTSK) are a coiled coil. A disordered region spans residues 159 to 185 (IPPESQVEKPVAEDEPAAGDKPAAAEQ).

In terms of assembly, interacts with AP2S1; the interaction is direct and mediates association with adaptor protein complex 2 (AP-2).

The protein localises to the membrane. Its subcellular location is the coated pit. In terms of biological role, regulates clathrin-mediated endocytsois of cargos such as transferrin probably through the association and modulation of adaptor protein complex 2 (AP-2). Has a role in ciliogenesis. Required for proper cephalic and left/right axis development. The sequence is that of Coiled-coil domain-containing protein 32 from Homo sapiens (Human).